The sequence spans 751 residues: Catalase-peroxidase (751 aa).

A disordered region spans residues 1–21 (MSNESKCPFHQTAGGGTTNRD). The tryptophyl-tyrosyl-methioninium (Trp-Tyr) (with M-270) cross-link spans 90 to 244 (WHSAGTYRIG…LAAVQMGLIY (155 aa)). His-91 (proton acceptor) is an active-site residue. Positions 244–270 (YVNPEGPEGNPDPVASGKDIRETFGRM) form a cross-link, tryptophyl-tyrosyl-methioninium (Tyr-Met) (with W-90). His-285 provides a ligand contact to heme b. A disordered region spans residues 365–390 (AHQWRPKEGKGAGTVPDAHDPGKKHA).

The protein belongs to the peroxidase family. Peroxidase/catalase subfamily. Homodimer or homotetramer. Requires heme b as cofactor. Formation of the three residue Trp-Tyr-Met cross-link is important for the catalase, but not the peroxidase activity of the enzyme.

It catalyses the reaction H2O2 + AH2 = A + 2 H2O. The catalysed reaction is 2 H2O2 = O2 + 2 H2O. In terms of biological role, bifunctional enzyme with both catalase and broad-spectrum peroxidase activity. This Pseudomonas putida (strain GB-1) protein is Catalase-peroxidase.